Here is a 323-residue protein sequence, read N- to C-terminus: Putative dTDP-D-glucose 4,6-dehydratase (323 aa).

Threonine 124 contacts substrate. Aspartate 125 acts as the Proton donor in catalysis. Catalysis depends on proton acceptor residues glutamate 126 and tyrosine 149.

It belongs to the NAD(P)-dependent epimerase/dehydratase family. dTDP-glucose dehydratase subfamily. It depends on NAD(+) as a cofactor.

It catalyses the reaction dTDP-alpha-D-glucose = dTDP-4-dehydro-6-deoxy-alpha-D-glucose + H2O. The sequence is that of Putative dTDP-D-glucose 4,6-dehydratase from Acanthamoeba polyphaga mimivirus (APMV).